Here is a 365-residue protein sequence, read N- to C-terminus: Alanine racemase (365 aa).

The active-site Proton acceptor; specific for D-alanine is the Lys-32. Lys-32 bears the N6-(pyridoxal phosphate)lysine mark. Arg-128 is a binding site for substrate. The Proton acceptor; specific for L-alanine role is filled by Tyr-257. Met-305 contacts substrate.

This sequence belongs to the alanine racemase family. The cofactor is pyridoxal 5'-phosphate.

It carries out the reaction L-alanine = D-alanine. It functions in the pathway amino-acid biosynthesis; D-alanine biosynthesis; D-alanine from L-alanine: step 1/1. In terms of biological role, catalyzes the interconversion of L-alanine and D-alanine. May also act on other amino acids. The protein is Alanine racemase (alr) of Francisella tularensis subsp. mediasiatica (strain FSC147).